Here is a 214-residue protein sequence, read N- to C-terminus: Outer membrane lipoprotein MapA (214 aa).

The first 17 residues, 1–17 (MFKKFLIFIVPILFLSA), serve as a signal peptide directing secretion. The N-palmitoyl cysteine moiety is linked to residue C18. C18 is lipidated: S-diacylglycerol cysteine.

It is found in the cell outer membrane. This Campylobacter jejuni subsp. jejuni serotype O:6 (strain 81116 / NCTC 11828) protein is Outer membrane lipoprotein MapA (mapA).